The following is a 133-amino-acid chain: Ribonuclease P protein component (133 aa).

This sequence belongs to the RnpA family. As to quaternary structure, consists of a catalytic RNA component (M1 or rnpB) and a protein subunit.

It catalyses the reaction Endonucleolytic cleavage of RNA, removing 5'-extranucleotides from tRNA precursor.. Its function is as follows. RNaseP catalyzes the removal of the 5'-leader sequence from pre-tRNA to produce the mature 5'-terminus. It can also cleave other RNA substrates such as 4.5S RNA. The protein component plays an auxiliary but essential role in vivo by binding to the 5'-leader sequence and broadening the substrate specificity of the ribozyme. This Paramagnetospirillum magneticum (strain ATCC 700264 / AMB-1) (Magnetospirillum magneticum) protein is Ribonuclease P protein component.